The chain runs to 152 residues: Large ribosomal subunit protein bL9 (152 aa).

This sequence belongs to the bacterial ribosomal protein bL9 family.

In terms of biological role, binds to the 23S rRNA. The protein is Large ribosomal subunit protein bL9 of Prochlorococcus marinus (strain NATL2A).